A 541-amino-acid polypeptide reads, in one-letter code: CTP synthase (541 aa).

Residues 1–271 form an amidoligase domain region; sequence MVGKLNPTRF…DTQILKHFDV (271 aa). S19 lines the CTP pocket. S19 provides a ligand contact to UTP. ATP contacts are provided by residues 20–25 and D77; that span reads SLGKGL. Mg(2+)-binding residues include D77 and E145. Residues 152-154, 192-197, and K228 each bind CTP; these read DIE and KTKPTQ. UTP contacts are provided by residues 192–197 and K228; that span reads KTKPTQ. In terms of domain architecture, Glutamine amidotransferase type-1 spans 296–537; sequence VIAIVGKYVT…VTSTLQVKKA (242 aa). G355 lines the L-glutamine pocket. The active-site Nucleophile; for glutamine hydrolysis is the C382. Residues 383-386, E406, and R465 each bind L-glutamine; that span reads LGMQ. Active-site residues include H510 and E512.

The protein belongs to the CTP synthase family. As to quaternary structure, homotetramer.

It carries out the reaction UTP + L-glutamine + ATP + H2O = CTP + L-glutamate + ADP + phosphate + 2 H(+). It catalyses the reaction L-glutamine + H2O = L-glutamate + NH4(+). The catalysed reaction is UTP + NH4(+) + ATP = CTP + ADP + phosphate + 2 H(+). It participates in pyrimidine metabolism; CTP biosynthesis via de novo pathway; CTP from UDP: step 2/2. Its activity is regulated as follows. Allosterically activated by GTP, when glutamine is the substrate; GTP has no effect on the reaction when ammonia is the substrate. The allosteric effector GTP functions by stabilizing the protein conformation that binds the tetrahedral intermediate(s) formed during glutamine hydrolysis. Inhibited by the product CTP, via allosteric rather than competitive inhibition. In terms of biological role, catalyzes the ATP-dependent amination of UTP to CTP with either L-glutamine or ammonia as the source of nitrogen. Regulates intracellular CTP levels through interactions with the four ribonucleotide triphosphates. The polypeptide is CTP synthase (Anaplasma phagocytophilum (strain HZ)).